The following is a 332-amino-acid chain: MIPVINQEKQGISGDFRLSVAPMMNWTDRYCRVFHRVLAPSARLYTEMVHAKAVIYGDRERLLGFASVEQPVALQLGGSEPALLAKAASIAVDWGYSEINLNCGCPSDRVQAGSFGACLMREPALVADCVAAMAAVVSVPVTVKCRLGVNEDDDYGRFAKFVDWVIGASSSRMIVVHARNAWLQGLSPKENREIPPLRYDWVYRLKRECPELAVVLNGGITSVEAGLDHLLMVDGVMLGRAAYQDPYILHQFYCALSNAPVLPRALLLRALRPYVEAWLEQGVTLRHIVRHLLGLFHGQPGGRVFRQVLTQGGQRSDADWSLVEQALSIIEG.

FMN is bound by residues 22–24 and glutamine 75; that span reads PMM. Cysteine 105 serves as the catalytic Proton donor. FMN contacts are provided by residues lysine 144, histidine 177, 217-219, and 239-240; these read NGG and GR.

The protein belongs to the Dus family. DusA subfamily. FMN serves as cofactor.

The catalysed reaction is 5,6-dihydrouridine(20) in tRNA + NADP(+) = uridine(20) in tRNA + NADPH + H(+). It carries out the reaction 5,6-dihydrouridine(20) in tRNA + NAD(+) = uridine(20) in tRNA + NADH + H(+). The enzyme catalyses 5,6-dihydrouridine(20a) in tRNA + NADP(+) = uridine(20a) in tRNA + NADPH + H(+). It catalyses the reaction 5,6-dihydrouridine(20a) in tRNA + NAD(+) = uridine(20a) in tRNA + NADH + H(+). Catalyzes the synthesis of 5,6-dihydrouridine (D), a modified base found in the D-loop of most tRNAs, via the reduction of the C5-C6 double bond in target uridines. Specifically modifies U20 and U20a in tRNAs. The polypeptide is tRNA-dihydrouridine(20/20a) synthase (Xylella fastidiosa (strain Temecula1 / ATCC 700964)).